Consider the following 458-residue polypeptide: UDP-N-acetylmuramate--L-alanine ligase (458 aa).

Residue 115-121 (GSHGKTT) coordinates ATP.

Belongs to the MurCDEF family.

The protein resides in the cytoplasm. It catalyses the reaction UDP-N-acetyl-alpha-D-muramate + L-alanine + ATP = UDP-N-acetyl-alpha-D-muramoyl-L-alanine + ADP + phosphate + H(+). It functions in the pathway cell wall biogenesis; peptidoglycan biosynthesis. Its function is as follows. Cell wall formation. The polypeptide is UDP-N-acetylmuramate--L-alanine ligase (Anaeromyxobacter dehalogenans (strain 2CP-1 / ATCC BAA-258)).